Reading from the N-terminus, the 238-residue chain is 1-(5-phosphoribosyl)-5-[(5-phosphoribosylamino)methylideneamino] imidazole-4-carboxamide isomerase (238 aa).

Catalysis depends on D8, which acts as the Proton acceptor. Catalysis depends on D129, which acts as the Proton donor.

This sequence belongs to the HisA/HisF family.

The protein resides in the cytoplasm. The enzyme catalyses 1-(5-phospho-beta-D-ribosyl)-5-[(5-phospho-beta-D-ribosylamino)methylideneamino]imidazole-4-carboxamide = 5-[(5-phospho-1-deoxy-D-ribulos-1-ylimino)methylamino]-1-(5-phospho-beta-D-ribosyl)imidazole-4-carboxamide. It participates in amino-acid biosynthesis; L-histidine biosynthesis; L-histidine from 5-phospho-alpha-D-ribose 1-diphosphate: step 4/9. This is 1-(5-phosphoribosyl)-5-[(5-phosphoribosylamino)methylideneamino] imidazole-4-carboxamide isomerase from Jannaschia sp. (strain CCS1).